The sequence spans 212 residues: Protein Thf1 (212 aa).

The stretch at 179–201 (ERMEQAVELMQETLAADRRKKEK) forms a coiled coil.

The protein belongs to the THF1 family.

Its function is as follows. May be involved in photosynthetic membrane biogenesis. This is Protein Thf1 from Parasynechococcus marenigrum (strain WH8102).